Reading from the N-terminus, the 519-residue chain is MAVAAPGQLNLDESPSWGSRSVDCFEKLEQIGEGTYGQVYMARETETQEIVALKKIRMDNEREGFPITAIREIKILKKLHHQNVIQLKEIVTSPGPERDEQGKPIHGNKYKGSIYMVFEYMDHDLTGLADRPGMRFTVPQIKCYMKQLLTGLHYCHINQVLHRDIKGSNLLIDNEGNLKLADFGLARSFSNDHNGNLTNRVITLWYRPPELLLGSTKYGPAVDMWSVGCIFAELLNGKPILPGKNEPEQLSKIFDVCGTPDESNWPGVTKMPWYNNFKPPRQLKRRVKEYFKHFDRLALDLLEKMLTLDPAQRISAQDALDAEYFWSDPLPCDPKSLPKYESSHEFQTKKKRQQMRQADEAAKRQKTQHPQPHGRLPPIQQTGQPHPQIRPGQPMNNPHAPMAAGPGHHYAKPRGPGGSSRYPQGGNQGGGYPNRGGQGGGGSYGNAPYPQQGRGPPPPYPGSGMAGTGGPRGGVGGGYGGGSNYPQQGGPYGPSGPGRGSNYPQQGGSRNQQQYGNWQ.

Residues 25 to 325 (FEKLEQIGEG…AQDALDAEYF (301 aa)) form the Protein kinase domain. ATP-binding positions include 31 to 39 (IGEGTYGQV) and Lys-54. Residue Thr-35 is modified to Phosphothreonine. A Phosphotyrosine modification is found at Tyr-36. Residue Asp-164 is the Proton acceptor of the active site. Thr-198 carries the phosphothreonine modification. Basic and acidic residues predominate over residues 336 to 348 (SLPKYESSHEFQT). Positions 336–519 (SLPKYESSHE…RNQQQYGNWQ (184 aa)) are disordered. Over residues 426–444 (GNQGGGYPNRGGQGGGGSY) the composition is skewed to gly residues. Positions 445–454 (GNAPYPQQGR) are enriched in low complexity. 2 stretches are compositionally biased toward gly residues: residues 464–483 (GMAG…GGGS) and 490–499 (GPYGPSGPGR). Over residues 505 to 519 (QQGGSRNQQQYGNWQ) the composition is skewed to polar residues.

It belongs to the protein kinase superfamily. CMGC Ser/Thr protein kinase family. CDC2/CDKX subfamily.

It catalyses the reaction L-seryl-[protein] + ATP = O-phospho-L-seryl-[protein] + ADP + H(+). The catalysed reaction is L-threonyl-[protein] + ATP = O-phospho-L-threonyl-[protein] + ADP + H(+). It carries out the reaction [DNA-directed RNA polymerase] + ATP = phospho-[DNA-directed RNA polymerase] + ADP + H(+). The polypeptide is Cyclin-dependent kinase C-1 (CDKC-1) (Oryza sativa subsp. japonica (Rice)).